We begin with the raw amino-acid sequence, 340 residues long: Olfactory receptor 5T3 (340 aa).

Residues 1–55 (MDSTFTGYNLYNLQVKTEMDKLSSGLDIYRNPLKNKTEVTMFILTGFTDDFELQV) are Extracellular-facing. A glycan (N-linked (GlcNAc...) asparagine) is linked at N35. A helical membrane pass occupies residues 56 to 76 (FLFLLFFAIYLFTLIGNLGLV). Over 77–84 (VLVIEDSW) the chain is Cytoplasmic. A helical membrane pass occupies residues 85–105 (LHNPMYYFLSVLSFLDACYST). At 106–129 (VVTPKMLVNFLAKNKSISFIGCAT) the chain is on the extracellular side. N-linked (GlcNAc...) asparagine glycosylation is present at N119. Cysteines 127 and 219 form a disulfide. The chain crosses the membrane as a helical span at residues 130-150 (QMLLFVTFGTTECFLLAAMAY). Over 151–169 (DHYVAIYNPLLYSVSMSPR) the chain is Cytoplasmic. The chain crosses the membrane as a helical span at residues 170–190 (VYVPLITASYVAGILHATIHI). Residues 191-226 (VATFSLSFCGSNEIRHVFCDMPPLLAISCSDTHTNQ) lie on the Extracellular side of the membrane. Residues 227 to 247 (LLLFYFVGSIEIVTILIVLIS) traverse the membrane as a helical segment. Residues 248 to 267 (CDFILLSILKMHSAKGRQKA) lie on the Cytoplasmic side of the membrane. The helical transmembrane segment at 268-288 (FSTCGSHLTGVTIYHGTILVS) threads the bilayer. At 289-301 (YMRPSSSYASDHD) the chain is on the extracellular side. A helical transmembrane segment spans residues 302–322 (IIVSIFYTIVIPKLNPIIYSL). Topologically, residues 323-340 (RNKEVKKAVKKMLKLVYK) are cytoplasmic.

The protein belongs to the G-protein coupled receptor 1 family.

The protein resides in the cell membrane. Functionally, odorant receptor. This is Olfactory receptor 5T3 (OR5T3) from Homo sapiens (Human).